A 143-amino-acid chain; its full sequence is Large ribosomal subunit protein uL16c (143 aa).

Belongs to the universal ribosomal protein uL16 family. As to quaternary structure, part of the 50S ribosomal subunit.

It is found in the plastid. The protein localises to the chloroplast. This Cyanidioschyzon merolae (strain NIES-3377 / 10D) (Unicellular red alga) protein is Large ribosomal subunit protein uL16c.